We begin with the raw amino-acid sequence, 548 residues long: Non-structural protein NS1 (548 aa).

This sequence belongs to the orbivirus non-structural protein NS1 family.

In Camelus dromedarius (Dromedary), this protein is Non-structural protein NS1 (Segment-5).